The primary structure comprises 344 residues: Photosystem II protein D1 (344 aa).

N-acetylthreonine is present on T2. At T2 the chain carries Phosphothreonine. 3 consecutive transmembrane segments (helical) span residues 29-46 (YIGW…TATS), 118-133 (HFFL…EWEL), and 142-156 (WIAV…AATA). H118 is a binding site for chlorophyll a. Pheophytin a is bound at residue Y126. D170 and E189 together coordinate [CaMn4O5] cluster. The chain crosses the membrane as a helical span at residues 197-218 (FHMLGVAGVFGGSLFSAMHGSL). H198 contributes to the chlorophyll a binding site. Residues H215 and 264-265 (SF) each bind a quinone. H215 provides a ligand contact to Fe cation. Fe cation is bound at residue H272. Residues 274–288 (FLAAWPVIGIWFTAL) traverse the membrane as a helical segment. [CaMn4O5] cluster contacts are provided by H332, E333, D342, and A344.

It belongs to the reaction center PufL/M/PsbA/D family. As to quaternary structure, PSII is composed of 1 copy each of membrane proteins PsbA, PsbB, PsbC, PsbD, PsbE, PsbF, PsbH, PsbI, PsbJ, PsbK, PsbL, PsbM, PsbT, PsbX, PsbY, PsbZ, Psb30/Ycf12, at least 3 peripheral proteins of the oxygen-evolving complex and a large number of cofactors. It forms dimeric complexes. The cofactor is The D1/D2 heterodimer binds P680, chlorophylls that are the primary electron donor of PSII, and subsequent electron acceptors. It shares a non-heme iron and each subunit binds pheophytin, quinone, additional chlorophylls, carotenoids and lipids. D1 provides most of the ligands for the Mn4-Ca-O5 cluster of the oxygen-evolving complex (OEC). There is also a Cl(-1) ion associated with D1 and D2, which is required for oxygen evolution. The PSII complex binds additional chlorophylls, carotenoids and specific lipids.. Post-translationally, tyr-161 forms a radical intermediate that is referred to as redox-active TyrZ, YZ or Y-Z.

Its subcellular location is the plastid. It localises to the chloroplast thylakoid membrane. The catalysed reaction is 2 a plastoquinone + 4 hnu + 2 H2O = 2 a plastoquinol + O2. In terms of biological role, photosystem II (PSII) is a light-driven water:plastoquinone oxidoreductase that uses light energy to abstract electrons from H(2)O, generating O(2) and a proton gradient subsequently used for ATP formation. It consists of a core antenna complex that captures photons, and an electron transfer chain that converts photonic excitation into a charge separation. The D1/D2 (PsbA/PsbD) reaction center heterodimer binds P680, the primary electron donor of PSII as well as several subsequent electron acceptors. The chain is Photosystem II protein D1 from Pleurastrum terricola (Filamentous green alga).